Consider the following 183-residue polypeptide: Crossover junction endodeoxyribonuclease RuvC (183 aa).

Catalysis depends on residues Asp7, Glu66, and Asp138. Mg(2+)-binding residues include Asp7, Glu66, and Asp138.

The protein belongs to the RuvC family. As to quaternary structure, homodimer which binds Holliday junction (HJ) DNA. The HJ becomes 2-fold symmetrical on binding to RuvC with unstacked arms; it has a different conformation from HJ DNA in complex with RuvA. In the full resolvosome a probable DNA-RuvA(4)-RuvB(12)-RuvC(2) complex forms which resolves the HJ. It depends on Mg(2+) as a cofactor.

The protein resides in the cytoplasm. It carries out the reaction Endonucleolytic cleavage at a junction such as a reciprocal single-stranded crossover between two homologous DNA duplexes (Holliday junction).. The RuvA-RuvB-RuvC complex processes Holliday junction (HJ) DNA during genetic recombination and DNA repair. Endonuclease that resolves HJ intermediates. Cleaves cruciform DNA by making single-stranded nicks across the HJ at symmetrical positions within the homologous arms, yielding a 5'-phosphate and a 3'-hydroxyl group; requires a central core of homology in the junction. The consensus cleavage sequence is 5'-(A/T)TT(C/G)-3'. Cleavage occurs on the 3'-side of the TT dinucleotide at the point of strand exchange. HJ branch migration catalyzed by RuvA-RuvB allows RuvC to scan DNA until it finds its consensus sequence, where it cleaves and resolves the cruciform DNA. The sequence is that of Crossover junction endodeoxyribonuclease RuvC from Burkholderia ambifaria (strain ATCC BAA-244 / DSM 16087 / CCUG 44356 / LMG 19182 / AMMD) (Burkholderia cepacia (strain AMMD)).